The primary structure comprises 589 residues: Heterogeneous nuclear ribonucleoprotein L (589 aa).

Residues 1 to 16 show a composition bias toward basic residues; it reads MSRRLLPRAEKRRRRL. The tract at residues 1–100 is disordered; the sequence is MSRRLLPRAE…NYDDPHKTPA (100 aa). A compositionally biased stretch (basic and acidic residues) spans 17-27; sequence EQRQQPDEQRR. Residues 38 to 54 are compositionally biased toward gly residues; the sequence is AGGGGGGGRYYGGGSEG. At Ser52 the chain carries Phosphoserine. Residues Lys59 and Lys62 each participate in a glycyl lysine isopeptide (Lys-Gly) (interchain with G-Cter in SUMO2) cross-link. Gly residues predominate over residues 69 to 90; it reads QHGGGGGGGGGAGAAGGGGGGE. Ser101 bears the Phosphoserine mark. The 75-residue stretch at 102–176 folds into the RRM 1 domain; it reads PVVHIRGLID…HPAFVNYSTS (75 aa). Lys136 is covalently cross-linked (Glycyl lysine isopeptide (Lys-Gly) (interchain with G-Cter in SUMO2)). Ser185 bears the Phosphoserine mark. The RRM 2 domain occupies 193–270; that stretch reads SVLLFTILNP…CTLKIEYAKP (78 aa). N6-acetyllysine is present on Lys269. The span at 284–301 shows a compositional bias: polar residues; that stretch reads DYTNPNLSGQGDPGSNPN. The interval 284 to 378 is disordered; that stretch reads DYTNPNLSGQ…PPPPPEYGPH (95 aa). 2 positions are modified to phosphoserine: Ser291 and Ser298. Lys302 participates in a covalent cross-link: Glycyl lysine isopeptide (Lys-Gly) (interchain with G-Cter in SUMO2). 2 positions are modified to asymmetric dimethylarginine: Arg354 and Arg358. Pro residues predominate over residues 364 to 375; the sequence is GHPPPPPPPPEY. At Ser381 the chain carries Phosphoserine. RRM domains are found at residues 382–478 and 495–583; these read PVLM…KDFS and RIQH…LCFS. Phosphoserine; by CaMK4 is present on Ser544. Residue Lys568 forms a Glycyl lysine isopeptide (Lys-Gly) (interchain with G-Cter in SUMO2) linkage.

As to quaternary structure, identified in a IGF2BP1-dependent mRNP granule complex containing untranslated mRNAs. Interacts with HNRNPLL. Interacts with APEX1; the interaction is DNA-dependent. Component of a complex with SETD2. Interacts with ELAVL1. Part of a transcription inhibitory ribonucleoprotein complex composed at least of the circular RNA circZNF827, ZNF827 and HNRNPK. Interacts with CHD8 in an RNA-dependent manner. In terms of processing, several isoelectric forms of the L protein are probably the results of post-translational modifications. Post-translationally, phosphorylation at Ser-544 by CaMK4 enhances interaction with a CaMK4-responsive RNA element (CaRRE1), and prevents inclusion of the stress axis-regulated exon (STREX) of the KCNMA1 potassium channel transcripts upon membrane depolarization.

The protein resides in the nucleus. Its subcellular location is the nucleoplasm. It is found in the cytoplasm. In terms of biological role, splicing factor binding to exonic or intronic sites and acting as either an activator or repressor of exon inclusion. Exhibits a binding preference for CA-rich elements. Component of the heterogeneous nuclear ribonucleoprotein (hnRNP) complexes and associated with most nascent transcripts. Associates, together with APEX1, to the negative calcium responsive element (nCaRE) B2 of the APEX2 promoter. As part of a ribonucleoprotein complex composed at least of ZNF827, HNRNPK and the circular RNA circZNF827 that nucleates the complex on chromatin, may negatively regulate the transcription of genes involved in neuronal differentiation. Regulates alternative splicing of a core group of genes involved in neuronal differentiation, likely by mediating H3K36me3-coupled transcription elongation and co-transcriptional RNA processing via interaction with CHD8. The chain is Heterogeneous nuclear ribonucleoprotein L (HNRNPL) from Homo sapiens (Human).